The primary structure comprises 448 residues: L-seryl-tRNA(Sec) selenium transferase (448 aa).

Lys-284 bears the N6-(pyridoxal phosphate)lysine mark.

The protein belongs to the SelA family. Pyridoxal 5'-phosphate serves as cofactor.

It is found in the cytoplasm. It catalyses the reaction L-seryl-tRNA(Sec) + selenophosphate + H(+) = L-selenocysteinyl-tRNA(Sec) + phosphate. Its pathway is aminoacyl-tRNA biosynthesis; selenocysteinyl-tRNA(Sec) biosynthesis; selenocysteinyl-tRNA(Sec) from L-seryl-tRNA(Sec) (bacterial route): step 1/1. Converts seryl-tRNA(Sec) to selenocysteinyl-tRNA(Sec) required for selenoprotein biosynthesis. The protein is L-seryl-tRNA(Sec) selenium transferase of Nautilia profundicola (strain ATCC BAA-1463 / DSM 18972 / AmH).